We begin with the raw amino-acid sequence, 123 residues long: Small ribosomal subunit protein uS12 (123 aa).

Aspartate 89 carries the 3-methylthioaspartic acid modification.

This sequence belongs to the universal ribosomal protein uS12 family. In terms of assembly, part of the 30S ribosomal subunit. Contacts proteins S8 and S17. May interact with IF1 in the 30S initiation complex.

In terms of biological role, with S4 and S5 plays an important role in translational accuracy. Its function is as follows. Interacts with and stabilizes bases of the 16S rRNA that are involved in tRNA selection in the A site and with the mRNA backbone. Located at the interface of the 30S and 50S subunits, it traverses the body of the 30S subunit contacting proteins on the other side and probably holding the rRNA structure together. The combined cluster of proteins S8, S12 and S17 appears to hold together the shoulder and platform of the 30S subunit. This is Small ribosomal subunit protein uS12 from Syntrophus aciditrophicus (strain SB).